We begin with the raw amino-acid sequence, 248 residues long: PACRG-like protein (248 aa).

N-acetylmethionine is present on Met-1. The disordered stretch occupies residues 1–72; the sequence is MQRSECSGGV…NPKTINPFGE (72 aa). 2 stretches are compositionally biased toward polar residues: residues 14 to 29 and 36 to 45; these read NRAT…SSTQ and VQRSKSSSLT. At Ser-47 the chain carries Phosphoserine.

In Mus musculus (Mouse), this protein is PACRG-like protein (Pacrgl).